Reading from the N-terminus, the 274-residue chain is Putative 2-succinyl-6-hydroxy-2,4-cyclohexadiene-1-carboxylate synthase (274 aa).

The AB hydrolase-1 domain maps to 26 to 259; it reads AVVCLHGFTG…KAGHTVHVEQ (234 aa).

The protein belongs to the AB hydrolase superfamily. MenH family. As to quaternary structure, monomer.

It catalyses the reaction 5-enolpyruvoyl-6-hydroxy-2-succinyl-cyclohex-3-ene-1-carboxylate = (1R,6R)-6-hydroxy-2-succinyl-cyclohexa-2,4-diene-1-carboxylate + pyruvate. It functions in the pathway quinol/quinone metabolism; 1,4-dihydroxy-2-naphthoate biosynthesis; 1,4-dihydroxy-2-naphthoate from chorismate: step 3/7. Its pathway is quinol/quinone metabolism; menaquinone biosynthesis. Its function is as follows. Catalyzes a proton abstraction reaction that results in 2,5-elimination of pyruvate from 2-succinyl-5-enolpyruvyl-6-hydroxy-3-cyclohexene-1-carboxylate (SEPHCHC) and the formation of 2-succinyl-6-hydroxy-2,4-cyclohexadiene-1-carboxylate (SHCHC). This chain is Putative 2-succinyl-6-hydroxy-2,4-cyclohexadiene-1-carboxylate synthase, found in Bacillus subtilis (strain 168).